The chain runs to 303 residues: Exosome complex component RRP4 homolog (303 aa).

The region spanning 175 to 213 is the KH domain; the sequence is GILIKVPPHLIKKSKKHFHTLPYGMAVIIGCNGSVWVTP.

This sequence belongs to the RRP4 family. Component of the RNA exosome complex. Ubiquitously expressed.

The protein localises to the nucleus. It localises to the nucleolus. It is found in the nucleoplasm. Its function is as follows. Non-catalytic component of the RNA exosome complex which has 3'-&gt;5' exoribonuclease activity and participates in a multitude of cellular RNA processing and degradation events. Involved in regulation of antisense ribosomal siRNA production. Involved in response to cold-warm shock. The polypeptide is Exosome complex component RRP4 homolog (Caenorhabditis elegans).